An 86-amino-acid chain; its full sequence is Elicitor peptide 5 (86 aa).

Positions 1–59 (MQQERDHKRDCCKLMPQTVKAFFKCLRFRRSSSSSSDMVKARARNEEKEEPSSIETSTR) are excised as a propeptide. A disordered region spans residues 31–86 (SSSSSSDMVKARARNEEKEEPSSIETSTRSLNVMRKGIRKQPVSSGKRGGVNDYDM). Residues 39–51 (VKARARNEEKEEP) show a composition bias toward basic and acidic residues.

Belongs to the brassicaceae elicitor peptide family.

Its function is as follows. Elicitor of plant defense. The sequence is that of Elicitor peptide 5 (PEP5) from Arabidopsis thaliana (Mouse-ear cress).